We begin with the raw amino-acid sequence, 234 residues long: Glucosamine-6-phosphate deaminase (234 aa).

The Proton acceptor; for enolization step role is filled by Asp-62. Catalysis depends on Asn-128, which acts as the For ring-opening step. His-130 (proton acceptor; for ring-opening step) is an active-site residue. Catalysis depends on Glu-135, which acts as the For ring-opening step.

It belongs to the glucosamine/galactosamine-6-phosphate isomerase family. NagB subfamily.

It catalyses the reaction alpha-D-glucosamine 6-phosphate + H2O = beta-D-fructose 6-phosphate + NH4(+). The protein operates within amino-sugar metabolism; N-acetylneuraminate degradation; D-fructose 6-phosphate from N-acetylneuraminate: step 5/5. In terms of biological role, catalyzes the reversible isomerization-deamination of glucosamine 6-phosphate (GlcN6P) to form fructose 6-phosphate (Fru6P) and ammonium ion. The sequence is that of Glucosamine-6-phosphate deaminase from Streptococcus uberis (strain ATCC BAA-854 / 0140J).